The following is a 204-amino-acid chain: Sec-independent protein translocase protein TatB (204 aa).

Residues 1–21 (MFDIGFSELLLIFIVGLVVLG) traverse the membrane as a helical segment. The span at 154-166 (VVSSVDSIQNGQS) shows a compositional bias: polar residues. The disordered stretch occupies residues 154 to 204 (VVSSVDSIQNGQSDLELDAQAEVDRQLAAMMDKYAPPDDVAENPISTEKTS).

This sequence belongs to the TatB family. As to quaternary structure, the Tat system comprises two distinct complexes: a TatABC complex, containing multiple copies of TatA, TatB and TatC subunits, and a separate TatA complex, containing only TatA subunits. Substrates initially bind to the TatABC complex, which probably triggers association of the separate TatA complex to form the active translocon.

The protein resides in the cell inner membrane. In terms of biological role, part of the twin-arginine translocation (Tat) system that transports large folded proteins containing a characteristic twin-arginine motif in their signal peptide across membranes. Together with TatC, TatB is part of a receptor directly interacting with Tat signal peptides. TatB may form an oligomeric binding site that transiently accommodates folded Tat precursor proteins before their translocation. This is Sec-independent protein translocase protein TatB from Mannheimia succiniciproducens (strain KCTC 0769BP / MBEL55E).